The following is a 126-amino-acid chain: Large ribosomal subunit protein bL20 (126 aa).

Belongs to the bacterial ribosomal protein bL20 family.

In terms of biological role, binds directly to 23S ribosomal RNA and is necessary for the in vitro assembly process of the 50S ribosomal subunit. It is not involved in the protein synthesizing functions of that subunit. This Buchnera aphidicola subsp. Baizongia pistaciae (strain Bp) protein is Large ribosomal subunit protein bL20.